Consider the following 279-residue polypeptide: Very long chain fatty acid elongase 2 (279 aa).

7 helical membrane-spanning segments follow: residues 12–32 (WFLL…LLSI), 50–70 (ILTL…VELV), 98–118 (VLWW…FFVL), 136–156 (MFNI…FFGP), 158–178 (LNSF…FPSM), 188–208 (LTQA…SAVV), and 213–233 (FPFG…ILFL). The short motif at 276–279 (KKVQ) is the Di-lysine motif element.

Belongs to the ELO family. ELOVL2 subfamily. As to quaternary structure, interacts with TECR.

It localises to the endoplasmic reticulum membrane. The enzyme catalyses a very-long-chain acyl-CoA + malonyl-CoA + H(+) = a very-long-chain 3-oxoacyl-CoA + CO2 + CoA. It catalyses the reaction (7Z,10Z,13Z,16Z,19Z)-docosapentaenoyl-CoA + malonyl-CoA + H(+) = (9Z,12Z,15Z,18Z,21Z)-3-oxotetracosapentaenoyl-CoA + CO2 + CoA. The catalysed reaction is (5Z,8Z,11Z,14Z,17Z)-eicosapentaenoyl-CoA + malonyl-CoA + H(+) = 3-oxo-(7Z,10Z,13Z,16Z,19Z)-docosapentaenoyl-CoA + CO2 + CoA. It carries out the reaction (5Z,8Z,11Z,14Z)-eicosatetraenoyl-CoA + malonyl-CoA + H(+) = (7Z,10Z,13Z,16Z)-3-oxodocosatetraenoyl-CoA + CO2 + CoA. The enzyme catalyses (7Z,10Z,13Z,16Z)-docosatetraenoyl-CoA + malonyl-CoA + H(+) = (9Z,12Z,15Z,18Z)-3-oxotetracosatetraenoyl-CoA + CO2 + CoA. Its pathway is lipid metabolism; polyunsaturated fatty acid biosynthesis. Functionally, catalyzes the first and rate-limiting reaction of the four reactions that constitute the long-chain fatty acids elongation cycle. This endoplasmic reticulum-bound enzymatic process allows the addition of 2 carbons to the chain of long- and very long-chain fatty acids (VLCFAs) per cycle. Condensing enzyme that catalyzes the synthesis of polyunsaturated very long chain fatty acid (C20- and C22-PUFA), acting specifically toward polyunsaturated acyl-CoA with the higher activity toward C20:4(n-6) acyl-CoA. May participate in the production of polyunsaturated VLCFAs of different chain lengths that are involved in multiple biological processes as precursors of membrane lipids and lipid mediators. This is Very long chain fatty acid elongase 2 from Rattus norvegicus (Rat).